The sequence spans 71 residues: Beta-defensin 9 (71 aa).

The first 23 residues, 1-23 (MRTLCSLLLICCLLFSYDTPVVG), serve as a signal peptide directing secretion. Cystine bridges form between C37/C66, C44/C59, and C49/C67.

It belongs to the beta-defensin family.

The protein localises to the secreted. Has antibacterial activity. The polypeptide is Beta-defensin 9 (Defb9) (Rattus norvegicus (Rat)).